We begin with the raw amino-acid sequence, 1005 residues long: Myosin IE heavy chain (1005 aa).

The region spanning 8 to 693 (EGVPDFVLLN…TLFYFEEKRE (686 aa)) is the Myosin motor domain. 101–108 (GESGAGKT) is a binding site for ATP. A disordered region spans residues 539–562 (SDPLVQGLFPPTRPEDSKKRPETA). The segment covering 551–560 (RPEDSKKRPE) has biased composition (basic and acidic residues). The interval 556-630 (KKRPETAGSQ…RAGFAGRIEY (75 aa)) is actin-binding. IQ domains are found at residues 694–722 (LEMPRIVTLIQKTWRGYRARSKWNQRKAA) and 716–745 (WNQRKAAIKIQLFYRSYRYKKWFRELHRAF). Residues 810 to 1004 (KKKWDFRRHF…KGNQATIQFK (195 aa)) form the TH1 domain.

The protein belongs to the TRAFAC class myosin-kinesin ATPase superfamily. Myosin family. Myosin I heavy chain is single-headed. Dimer of a heavy and a light chain. Inability to self-assemble into filaments.

Functionally, myosin is a protein that binds to actin and has ATPase activity that is activated by actin. May play a role in moving membranes relative to actin. This is Myosin IE heavy chain (myoE) from Dictyostelium discoideum (Social amoeba).